Here is a 251-residue protein sequence, read N- to C-terminus: Sugar fermentation stimulation protein homolog (251 aa).

It belongs to the SfsA family.

In Prochlorococcus marinus (strain MIT 9313), this protein is Sugar fermentation stimulation protein homolog.